A 233-amino-acid chain; its full sequence is Tapetum-specific methyltransferase 1 (233 aa).

Lys-8 contributes to the substrate binding site. S-adenosyl-L-methionine is bound by residues Val-52, Glu-74, 76–77, Ser-82, Asp-100, and Ala-129; that span reads GV. Residue Asp-150 coordinates substrate. Asp-150 is an a divalent metal cation binding site. Asp-152 contacts S-adenosyl-L-methionine. Residues Asp-176 and Asn-177 each coordinate a divalent metal cation.

It belongs to the class I-like SAM-binding methyltransferase superfamily. Cation-dependent O-methyltransferase family. CCoAMT subfamily. Requires a divalent metal cation as cofactor. Expressed in inflorescences and flower buds. Not detected in roots, leaves or stems. Located exclusively in the tapetum of developing stamen.

It participates in aromatic compound metabolism; phenylpropanoid biosynthesis. Functionally, methyltransferase involved in phenylpropanoid polyamine conjugate biosynthesis. In vivo, methylates only one of the 5-hydroxyferuloyl moieties of N1,N5,N10-tri-(hydroxyferuloyl)-spermidine, while is able in vitro to convert all three 5-hydroxyferuloyl residues to the corresponding sinapoyl moieties and to methylate caffeoyl CoA and tricaffeoyl spermidine. The protein is Tapetum-specific methyltransferase 1 (TSM1) of Arabidopsis thaliana (Mouse-ear cress).